Reading from the N-terminus, the 253-residue chain is U2 small nuclear ribonucleoprotein A' (253 aa).

4 LRR repeats span residues 19–40, 41–62, 63–84, and 87–108; these read KDRE…GIAK, DQDA…PFFP, RLHT…IAST, and NLTT…DPLR. The 39-residue stretch at 121 to 159 folds into the LRRCT domain; it reads NPVTRKEHYRYWVIWRIPSVRFLDYQKVKDAERAKAKEL. Positions 228–253 are disordered; that stretch reads ELNEGRIPGGALDAGEDSEDENQMQT. Acidic residues predominate over residues 241 to 253; the sequence is AGEDSEDENQMQT.

This sequence belongs to the U2 small nuclear ribonucleoprotein A family. As to quaternary structure, associated with the spliceosome.

It is found in the nucleus. Its function is as follows. Involved in pre-mRNA splicing. The polypeptide is U2 small nuclear ribonucleoprotein A' (lea1) (Aspergillus fumigatus (strain ATCC MYA-4609 / CBS 101355 / FGSC A1100 / Af293) (Neosartorya fumigata)).